A 132-amino-acid polypeptide reads, in one-letter code: PGA2-homolog C27.01c (132 aa).

A helical transmembrane segment spans residues 17 to 34 (WIRIIVYVGGYMLIRPYL). Disordered stretches follow at residues 50–90 (LLEG…DAEF) and 106–132 (EYFK…HLED). Over residues 62 to 75 (EMTHGTKPKEHGEF) the composition is skewed to basic and acidic residues. A compositionally biased stretch (acidic residues) spans 76 to 87 (DTDDEEEEENPD). Thr77 is modified (phosphothreonine). The segment covering 106 to 115 (EYFKNQDKSP) has biased composition (basic and acidic residues). The span at 119–132 (YADDDEDIEEHLED) shows a compositional bias: acidic residues.

This sequence belongs to the PGA2 family.

It localises to the endoplasmic reticulum membrane. The protein resides in the nucleus membrane. In terms of biological role, involved processing and trafficking glycosylated proteins. The polypeptide is PGA2-homolog C27.01c (Schizosaccharomyces pombe (strain 972 / ATCC 24843) (Fission yeast)).